We begin with the raw amino-acid sequence, 345 residues long: D-fructose 1,6-bisphosphatase class 2/sedoheptulose 1,7-bisphosphatase (345 aa).

The Mn(2+) site is built by Asp-33, Glu-57, Asp-97, and Glu-100. Substrate contacts are provided by residues 100–102, Tyr-131, 176–178, and 198–200; these read EGT, RPR, and DGD. Glu-225 provides a ligand contact to Mn(2+).

It belongs to the FBPase class 2 family. Homotetramer. Mn(2+) serves as cofactor.

The enzyme catalyses beta-D-fructose 1,6-bisphosphate + H2O = beta-D-fructose 6-phosphate + phosphate. It catalyses the reaction D-sedoheptulose 1,7-bisphosphate + H2O = D-sedoheptulose 7-phosphate + phosphate. The protein operates within carbohydrate biosynthesis; Calvin cycle. Functionally, catalyzes the hydrolysis of fructose 1,6-bisphosphate (Fru 1,6-P2) and sedoheptulose 1,7-bisphosphate (Sed 1,7-P2) to fructose 6-phosphate and sedoheptulose 7-phosphate, respectively. This Microcystis aeruginosa (strain NIES-843 / IAM M-2473) protein is D-fructose 1,6-bisphosphatase class 2/sedoheptulose 1,7-bisphosphatase.